The chain runs to 399 residues: Mannan endo-1,4-beta-mannosidase 4 (399 aa).

The signal sequence occupies residues 1-26 (MNNSIILIFVAILIIFPNEFSKPTRA). Positions 88 and 203 each coordinate substrate. E204 serves as the catalytic Proton donor. A substrate-binding site is contributed by Y279. E318 (nucleophile) is an active-site residue. A disulfide bridge links C347 with C354. Residue W360 coordinates substrate.

The protein belongs to the glycosyl hydrolase 5 (cellulase A) family. In terms of tissue distribution, expressed in flowers and fruit pericarp.

It is found in the secreted. The enzyme catalyses Random hydrolysis of (1-&gt;4)-beta-D-mannosidic linkages in mannans, galactomannans and glucomannans.. In terms of biological role, possesses endo-beta-mannanase and mannan transglycosylase activities. May be involved in cell wall degradation during fruit ripening. The protein is Mannan endo-1,4-beta-mannosidase 4 (MAN4) of Solanum lycopersicum (Tomato).